Reading from the N-terminus, the 388-residue chain is Alcohol dehydrogenase patD (388 aa).

A Zn(2+)-binding site is contributed by Cys-46. His-47 provides a ligand contact to NAD(+). 5 residues coordinate Zn(2+): His-67, Glu-68, Cys-101, Cys-104, and Cys-112. Residue His-67 coordinates substrate. NAD(+)-binding positions include 198-203 (VALSRG), 295-297 (SLL), and 320-322 (EEA).

Belongs to the zinc-containing alcohol dehydrogenase family. Zn(2+) is required as a cofactor.

It is found in the cytoplasm. Its subcellular location is the cytosol. The catalysed reaction is neopatulin + NADPH + H(+) = (E)-ascladiol + NADP(+). It functions in the pathway mycotoxin biosynthesis; patulin biosynthesis. Its function is as follows. Alcohol dehydrogenase; part of the gene cluster that mediates the biosynthesis of patulin, an acetate-derived tetraketide mycotoxin produced by several fungal species that shows antimicrobial properties against several bacteria. PatD catalyzes the conversion of neopatulin into E-ascladiol. The pathway begins with the synthesis of 6-methylsalicylic acid by the polyketide synthase (PKS) patK via condensation of acetate and malonate units. The 6-methylsalicylic acid decarboxylase patG then catalyzes the decarboxylation of 6-methylsalicylic acid to yield m-cresol (also known as 3-methylphenol). These first reactions occur in the cytosol. The intermediate m-cresol is then transported into the endoplasmic reticulum where the cytochrome P450 monooxygenase patH converts it to m-hydroxybenzyl alcohol, which is further converted to gentisyl alcohol by the cytochrome P450 monooxygenase patI. The oxidoreductases patJ and patO further convert gentisyl alcohol to isoepoxydon in the vacuole. PatN catalyzes then the transformation of isoepoxydon into phyllostine. The cluster protein patF is responsible for the conversion from phyllostine to neopatulin whereas the alcohol dehydrogenase patD converts neopatulin to E-ascladiol. The steps between isoepoxydon and E-ascladiol occur in the cytosol, and E-ascladiol is probably secreted to the extracellular space by one of the cluster-specific transporters patC or patM. Finally, the secreted patulin synthase patE catalyzes the conversion of E-ascladiol to patulin. The chain is Alcohol dehydrogenase patD from Aspergillus clavatus (strain ATCC 1007 / CBS 513.65 / DSM 816 / NCTC 3887 / NRRL 1 / QM 1276 / 107).